Here is a 307-residue protein sequence, read N- to C-terminus: Elongation factor Ts (307 aa).

Positions 79–82 (TDFV) are involved in Mg(2+) ion dislocation from EF-Tu.

This sequence belongs to the EF-Ts family.

It localises to the cytoplasm. Functionally, associates with the EF-Tu.GDP complex and induces the exchange of GDP to GTP. It remains bound to the aminoacyl-tRNA.EF-Tu.GTP complex up to the GTP hydrolysis stage on the ribosome. This Rhizobium meliloti (strain 1021) (Ensifer meliloti) protein is Elongation factor Ts.